The following is a 234-amino-acid chain: Uracil-DNA glycosylase (234 aa).

The active-site Proton acceptor is aspartate 68.

This sequence belongs to the uracil-DNA glycosylase (UDG) superfamily. UNG family.

The protein localises to the cytoplasm. It carries out the reaction Hydrolyzes single-stranded DNA or mismatched double-stranded DNA and polynucleotides, releasing free uracil.. Functionally, excises uracil residues from the DNA which can arise as a result of misincorporation of dUMP residues by DNA polymerase or due to deamination of cytosine. The sequence is that of Uracil-DNA glycosylase from Ruegeria sp. (strain TM1040) (Silicibacter sp.).